The sequence spans 492 residues: 5-taurinomethyluridine-[tRNA] synthase subunit GTPB3, mitochondrial (492 aa).

The transit peptide at 1–20 (MWRGLWTLAAQAARGPRRLC) directs the protein to the mitochondrion. Residues arginine 52, glutamate 112, and lysine 152 each coordinate 5,10-methylenetetrahydrofolate. The TrmE-type G domain maps to 249 to 416 (GVHVVVTGPP…LLEALRKELA (168 aa)). Residues 256-263 (GPPNAGKS), 282-286 (GTTRD), 303-306 (DTAG), 374-377 (NKSD), and 397-399 (SCL) each bind GTP. Asparagine 259 lines the K(+) pocket. 2 residues coordinate Mg(2+): serine 263 and threonine 284. Lysine 492 serves as a coordination point for 5,10-methylenetetrahydrofolate.

The protein belongs to the TRAFAC class TrmE-Era-EngA-EngB-Septin-like GTPase superfamily. TrmE GTPase family. Homodimer; forms a dimer in the presence of potassium. Interacts with MTO1; forms the GTPBP3-MTO1 complex composed of homodimers of GTPBP3 and MTO1. As to quaternary structure, homodimer, forms homodimer in vivo. K(+) serves as cofactor. As to expression, ubiquitously expressed.

It is found in the mitochondrion. The protein resides in the cytoplasm. The enzyme catalyses GTP + H2O = GDP + phosphate + H(+). Its function is as follows. GTPase component of the GTPBP3-MTO1 complex that catalyzes the 5-taurinomethyluridine (taum(5)U) modification at the 34th wobble position (U34) of mitochondrial tRNAs (mt-tRNAs), which plays a role in mt-tRNA decoding and mitochondrial translation. Taum(5)U formation on mammalian mt-tRNA requires the presence of both GTPBP3-mediated GTPase activity and MTO1 catalytic activity. The sequence is that of 5-taurinomethyluridine-[tRNA] synthase subunit GTPB3, mitochondrial from Homo sapiens (Human).